The chain runs to 324 residues: Adenine deaminase (324 aa).

Zn(2+) contacts are provided by His11, His13, and His189. Glu192 (proton donor) is an active-site residue. Asp270 serves as a coordination point for Zn(2+). A substrate-binding site is contributed by Asp271.

It belongs to the metallo-dependent hydrolases superfamily. Adenosine and AMP deaminases family. Adenine deaminase type 2 subfamily. Zn(2+) serves as cofactor.

The catalysed reaction is adenine + H2O + H(+) = hypoxanthine + NH4(+). Its function is as follows. Catalyzes the hydrolytic deamination of adenine to hypoxanthine. Plays an important role in the purine salvage pathway and in nitrogen catabolism. The sequence is that of Adenine deaminase from Rhizobium meliloti (strain 1021) (Ensifer meliloti).